The following is a 327-amino-acid chain: Interleukin-12 subunit beta (327 aa).

The N-terminal stretch at 1–22 (MHPQQLVVSWFSLVLLASPIVA) is a signal peptide. Residues 23 to 106 (MWELEKNVYV…LSRSLLLLHK (84 aa)) enclose the Ig-like C2-type domain. An intrachain disulfide couples C50 to C90. N223 is a glycosylation site (N-linked (GlcNAc...) asparagine). The 90-residue stretch at 238-327 (PPKNLQLRPL…WSEWASVSCS (90 aa)) folds into the Fibronectin type-III domain.

The protein belongs to the IL-12B family. As to quaternary structure, heterodimer with IL12A; disulfide-linked. The heterodimer is known as interleukin IL-12. Heterodimer with IL23A; disulfide-linked. The heterodimer is known as interleukin IL-23. Also secreted as a monomer. Interacts with NBR1; this interaction promotes IL-12 secretion.

It localises to the secreted. In terms of biological role, cytokine that can act as a growth factor for activated T and NK cells, enhance the lytic activity of NK/lymphokine-activated killer cells, and stimulate the production of IFN-gamma by resting PBMC. Its function is as follows. Associates with IL23A to form the IL-23 interleukin, a heterodimeric cytokine which functions in innate and adaptive immunity. IL-23 may constitute with IL-17 an acute response to infection in peripheral tissues. IL-23 binds to a heterodimeric receptor complex composed of IL12RB1 and IL23R, activates the Jak-Stat signaling cascade, stimulates memory rather than naive T-cells and promotes production of pro-inflammatory cytokines. IL-23 induces autoimmune inflammation and thus may be responsible for autoimmune inflammatory diseases and may be important for tumorigenesis. The polypeptide is Interleukin-12 subunit beta (IL12B) (Bos taurus (Bovine)).